Consider the following 1258-residue polypeptide: Phosphatidylinositol 3,4,5-trisphosphate 5-phosphatase 2 (1258 aa).

The region spanning 21-117 (WYHRDLSRAA…GLVCALLLPV (97 aa)) is the SH2 domain. Over residues 119–132 (GEREPDPPDDRDAS) the composition is skewed to basic and acidic residues. Residues 119–180 (GEREPDPPDD…AESAPNGLST (62 aa)) form a disordered region. Phosphoserine is present on Ser132. Residues 145–155 (SGSTSISAPTG) show a composition bias toward polar residues. Over residues 156–166 (PSSPLPAPETP) the composition is skewed to pro residues. Position 165 is a phosphothreonine (Thr165). Ser241 and Ser352 each carry phosphoserine. Position 886 is a phosphotyrosine (Tyr886). Position 890 is a phosphoserine (Ser890). Residues 897–1118 (GAKSKAPSVS…FLGEVASGDD (222 aa)) are disordered. Pro residues predominate over residues 938 to 950 (PPPTGRPPAPPRA). The short motif at 944 to 949 (PPAPPR) is the SH3-binding element. Residues 951–965 (APREEPLTPRLKPEG) are compositionally biased toward basic and acidic residues. Thr958 carries the phosphothreonine modification. The NPXY motif signature appears at 983 to 986 (NPAY). Position 986 is a phosphotyrosine; by SRC (Tyr986). 3 stretches are compositionally biased toward pro residues: residues 996 to 1007 (LLPPEPPSPARA), 1048 to 1059 (LPPPDFPPPPLP), and 1087 to 1104 (GPPP…PGPS). Ser1131 carries the post-translational modification Phosphoserine. 2 positions are modified to phosphotyrosine: Tyr1135 and Tyr1162. The 63-residue stretch at 1196-1258 (LGEAGMSAWL…LLLDTLQLSK (63 aa)) folds into the SAM domain. Residue Ser1257 is modified to Phosphoserine.

Belongs to the inositol 1,4,5-trisphosphate 5-phosphatase family. In terms of assembly, interacts with tyrosine phosphorylated form of SHC1. Interacts with EGFR. Upon stimulation by the EGF signaling pathway, it forms a complex with SHC1 and EGFR. Interacts with cytoskeletal protein SORBS3/vinexin, promoting its localization to the periphery of cells. Forms a complex with filamin (FLNA or FLNB), actin, GPIb (GP1BA or GP1BB) that regulates cortical and submembraneous actin. Interacts with c-Met/MET, when c-Met/MET is phosphorylated on 'Tyr-1356'. Interacts with p130Cas/BCAR1. Interacts with CENTD3/ARAP3 via its SAM domain. Interacts with c-Cbl/CBL and CAP/SORBS1. Interacts with activated EPHA2 receptor. Interacts with receptor FCGR2A. Interacts with receptor FCGR2B. Interacts with tyrosine kinase ABL1. Interacts with tyrosine kinase TEC. Interacts with CSF1R. Interacts (via N-terminus) with SH3YL1 (via SH3 domain). Interacts with FCRL6 (tyrosine phosphorylated form). Interacts (via SH2 domain) with tyrosine phosphorylated KLRC1 (via ITIM). Interacts with NEDD9/HEF1. Tyrosine phosphorylated by the members of the SRC family after exposure to a diverse array of extracellular stimuli such as insulin, growth factors such as EGF or PDGF, chemokines, integrin ligands and hypertonic and oxidative stress. May be phosphorylated upon IgG receptor FCGR2B-binding. Phosphorylated at Tyr-986 following cell attachment and spreading. Phosphorylated at Tyr-1162 following EGF signaling pathway stimulation. Phosphorylated at Thr-958 in response to PDGF. In terms of tissue distribution, widely expressed, most prominently in skeletal muscle, heart and brain. Present in platelets. Expressed in transformed myeloid cells and in primary macrophages, but not in peripheral blood monocytes.

It localises to the cytoplasm. It is found in the cytosol. The protein localises to the cytoskeleton. Its subcellular location is the membrane. The protein resides in the cell projection. It localises to the filopodium. It is found in the lamellipodium. The protein localises to the basal cell membrane. Its subcellular location is the nucleus. The protein resides in the nucleus speckle. It localises to the spindle pole. It catalyses the reaction a 1,2-diacyl-sn-glycero-3-phospho-(1D-myo-inositol-3,4,5-trisphosphate) + H2O = a 1,2-diacyl-sn-glycero-3-phospho-(1D-myo-inositol-3,4-bisphosphate) + phosphate. The enzyme catalyses 1,2-dioctanoyl-sn-glycero-3-phospho-(1D-myo-inositol-3,4,5-trisphosphate) + H2O = 1,2-dioctanoyl-sn-glycero-3-phospho-(1D-myo-inositol-3,4-bisphosphate) + phosphate. It carries out the reaction 1,2-dihexadecanoyl-sn-glycero-3-phospho-(1D-myo-inositol-3,4,5-trisphosphate) + H2O = 1,2-dihexadecanoyl-sn-glycero-3-phospho-(1D-myo-inositol-3,4-bisphosphate) + phosphate. Its activity is regulated as follows. Activated upon translocation to the sites of synthesis of PtdIns(3,4,5)P3 in the membrane. Enzymatic activity is enhanced in the presence of phosphatidylserine. In terms of biological role, phosphatidylinositol (PtdIns) phosphatase that specifically hydrolyzes the 5-phosphate of phosphatidylinositol-3,4,5-trisphosphate (PtdIns(3,4,5)P3) to produce PtdIns(3,4)P2, thereby negatively regulating the PI3K (phosphoinositide 3-kinase) pathways. Required for correct mitotic spindle orientation and therefore progression of mitosis. Plays a central role in regulation of PI3K-dependent insulin signaling, although the precise molecular mechanisms and signaling pathways remain unclear. While overexpression reduces both insulin-stimulated MAP kinase and Akt activation, its absence does not affect insulin signaling or GLUT4 trafficking. Confers resistance to dietary obesity. May act by regulating AKT2, but not AKT1, phosphorylation at the plasma membrane. Part of a signaling pathway that regulates actin cytoskeleton remodeling. Required for the maintenance and dynamic remodeling of actin structures as well as in endocytosis, having a major impact on ligand-induced EGFR internalization and degradation. Participates in regulation of cortical and submembraneous actin by hydrolyzing PtdIns(3,4,5)P3 thereby regulating membrane ruffling. Regulates cell adhesion and cell spreading. Required for HGF-mediated lamellipodium formation, cell scattering and spreading. Acts as a negative regulator of EPHA2 receptor endocytosis by inhibiting via PI3K-dependent Rac1 activation. Acts as a regulator of neuritogenesis by regulating PtdIns(3,4,5)P3 level and is required to form an initial protrusive pattern, and later, maintain proper neurite outgrowth. Acts as a negative regulator of the FC-gamma-RIIA receptor (FCGR2A). Mediates signaling from the FC-gamma-RIIB receptor (FCGR2B), playing a central role in terminating signal transduction from activating immune/hematopoietic cell receptor systems. Involved in EGF signaling pathway. Upon stimulation by EGF, it is recruited by EGFR and dephosphorylates PtdIns(3,4,5)P3. Plays a negative role in regulating the PI3K-PKB pathway, possibly by inhibiting PKB activity. Down-regulates Fc-gamma-R-mediated phagocytosis in macrophages independently of INPP5D/SHIP1. In macrophages, down-regulates NF-kappa-B-dependent gene transcription by regulating macrophage colony-stimulating factor (M-CSF)-induced signaling. Plays a role in the localization of AURKA and NEDD9/HEF1 to the basolateral membrane at interphase in polarized cysts, thereby mediates cell cycle homeostasis, cell polarization and cilia assembly. Additionally promotion of cilia growth is also facilitated by hydrolysis of (PtdIns(3,4,5)P3) to PtdIns(3,4)P2. Promotes formation of apical membrane-initiation sites during the initial stages of lumen formation via Rho family-induced actin filament organization and CTNNB1 localization to cell-cell contacts. May also hydrolyze PtdIns(1,3,4,5)P4, and could thus affect the levels of the higher inositol polyphosphates like InsP6. Involved in endochondral ossification. The protein is Phosphatidylinositol 3,4,5-trisphosphate 5-phosphatase 2 of Homo sapiens (Human).